The chain runs to 106 residues: A-type ATP synthase subunit F (106 aa).

This sequence belongs to the V-ATPase F subunit family. In terms of assembly, has multiple subunits with at least A(3), B(3), C, D, E, F, H, I and proteolipid K(x).

The protein resides in the cell membrane. Component of the A-type ATP synthase that produces ATP from ADP in the presence of a proton gradient across the membrane. The chain is A-type ATP synthase subunit F from Methanosphaera stadtmanae (strain ATCC 43021 / DSM 3091 / JCM 11832 / MCB-3).